Consider the following 620-residue polypeptide: MALLQIAEPGLTAAPHQHRLAVGIDLGTTNSLVAAVRSGVANTLADESAQHSLPSVVRYTQDSVFVGREAEAFSAQDPQNTIISVKRFMGRSLDDIQSGSQTFPYIFEASDNGLPIFITPQGKVNPIQVSADILKPLVERAESTLGGTLEGVVITVPAYFDDAQRQGTKEAAALVGVKVLRLLNEPTAAAIAYGLDSGQEGVIAVYDLGGGTFDISILRLNKGVFEVLATGGDSALGGDDFDHMLQAHFQQQWSLDEVSAGLSRMLLIEARKVKEALTDSDNTTANVTDDNGNVLSLNVSRATFDEMISKLVKKTVSSCRRALRDAGVSTDEVIETVMVGGSTRVPLVRGEVANFFGKTPLTSIDPDRVVAIGAAIQADILVGNKPDSDLLLLDVIPLSLGIETMGGLVEKVVARNTTIPVARAQEFTTFKDGQTAMAFHVVQGERELVADCRSLARFTLNGIPPLAAGAAHIRVTFQVDADGLLSVTAMEKSTGVKTTIQVKPSFGLSDAEIGSMLKDSMANAKEDISRRMLAEKQVEAARVLESLSAALNKDGQLLAANELSAIQGAMALLAQLAEEKDTDAIEDAIEALDTATQDFAAKRMDNSIKLALKGQSVDNI.

Belongs to the heat shock protein 70 family.

Chaperone involved in the maturation of iron-sulfur cluster-containing proteins. Has a low intrinsic ATPase activity which is markedly stimulated by HscB. This chain is Chaperone protein HscA homolog, found in Shewanella piezotolerans (strain WP3 / JCM 13877).